The following is a 261-amino-acid chain: Membrane protein insertase MisCA (261 aa).

The signal sequence occupies residues 1 to 22; sequence MLLKRRIGLLLSMVGVFMLLAG. Cysteine 23 carries N-palmitoyl cysteine lipidation. The S-diacylglycerol cysteine moiety is linked to residue cysteine 23. Transmembrane regions (helical) follow at residues 61–81, 131–151, 174–194, 204–224, and 225–245; these read YGLSIILVTILIRLLILPLMI, LAGCFPILIQMPILIGFYHAI, YILPIVAGVATFVQQKLMMAG, MMLWIMPIMIIVFAINFPAAL, and SLYWVVGNLFMIAQTFLIKGP.

Belongs to the OXA1/ALB3/YidC family. Type 2 subfamily. Mostly monomeric, it may also form dimers. Interacts with SpoIIIAE. Forms a complex with the F(1)F(0) ATP synthase in which can be found the alpha, beta, gamma, delta and epsilon subunits of F(1) and a, b and subunits of F(0). YqgA is found in the same complex.

It localises to the cell membrane. In terms of biological role, required for the insertion and/or proper folding and/or complex formation of integral membrane proteins into the membrane. Involved in integration of membrane proteins that insert both dependently and independently of the Sec translocase complex, as well as at least some lipoproteins. Also involved in protein secretion processes. Essential for sporulation by activating sigma factor SpoIIIG/SigG after engulfment is completed in the prespore, maybe by acting on SpoIIIAE. It has an overlapping, although partly distinct, function compared to YqjG(MisCB). This is Membrane protein insertase MisCA (misCA) from Bacillus subtilis (strain 168).